A 352-amino-acid polypeptide reads, in one-letter code: Ketoisovalerate oxidoreductase subunit VorB (352 aa).

In terms of assembly, heterotrimer of the VorA, VorB and VorC subunits.

It catalyses the reaction 3-methyl-2-oxobutanoate + 2 oxidized [2Fe-2S]-[ferredoxin] + CoA = 2-methylpropanoyl-CoA + 2 reduced [2Fe-2S]-[ferredoxin] + CO2 + H(+). The protein is Ketoisovalerate oxidoreductase subunit VorB (vorB) of Methanothermobacter marburgensis (strain ATCC BAA-927 / DSM 2133 / JCM 14651 / NBRC 100331 / OCM 82 / Marburg) (Methanobacterium thermoautotrophicum).